Here is a 500-residue protein sequence, read N- to C-terminus: POU domain, class 3, transcription factor 3 (500 aa).

A compositionally biased stretch (gly residues) spans glycine 32–glutamine 52. 4 disordered regions span residues glycine 32 to tyrosine 63, tryptophan 122 to alanine 190, asparagine 231 to serine 319, and glutamate 461 to glutamine 500. Composition is skewed to pro residues over residues glutamine 134 to glycine 146 and histidine 171 to glutamine 181. Residues glycine 241–alanine 251 are compositionally biased toward gly residues. Over residues histidine 270–histidine 287 the composition is skewed to basic residues. Residues histidine 293–proline 303 are compositionally biased toward gly residues. A POU-specific domain is found at glutamate 314 to aspartate 388. A DNA-binding region (homeobox) is located at residues lysine 406–threonine 465. Positions glycine 468–alanine 486 are enriched in polar residues.

Belongs to the POU transcription factor family. Class-3 subfamily. In terms of assembly, homodimer. As to expression, brain.

The protein localises to the nucleus. Its function is as follows. Transcription factor that acts synergistically with SOX11 and SOX4. Plays a role in neuronal development. Is implicated in an enhancer activity at the embryonic met-mesencephalic junction; the enhancer element contains the octamer motif (5'-ATTTGCAT-3'). The sequence is that of POU domain, class 3, transcription factor 3 from Homo sapiens (Human).